A 335-amino-acid chain; its full sequence is Fructose-1,6-bisphosphatase class 1 (335 aa).

Mg(2+) is bound by residues Glu92, Asp114, Leu116, and Asp117. Substrate is bound by residues 117 to 120 (DGSS), Asn209, and Lys275. Glu281 contacts Mg(2+).

The protein belongs to the FBPase class 1 family. As to quaternary structure, homotetramer. Mg(2+) is required as a cofactor.

It is found in the cytoplasm. The enzyme catalyses beta-D-fructose 1,6-bisphosphate + H2O = beta-D-fructose 6-phosphate + phosphate. It participates in carbohydrate biosynthesis; gluconeogenesis. This chain is Fructose-1,6-bisphosphatase class 1, found in Delftia acidovorans (strain DSM 14801 / SPH-1).